The following is a 141-amino-acid chain: Large ribosomal subunit protein uL11 (141 aa).

The protein belongs to the universal ribosomal protein uL11 family. As to quaternary structure, part of the ribosomal stalk of the 50S ribosomal subunit. Interacts with L10 and the large rRNA to form the base of the stalk. L10 forms an elongated spine to which L12 dimers bind in a sequential fashion forming a multimeric L10(L12)X complex. In terms of processing, one or more lysine residues are methylated.

Forms part of the ribosomal stalk which helps the ribosome interact with GTP-bound translation factors. This Chlorobium phaeobacteroides (strain BS1) protein is Large ribosomal subunit protein uL11.